The following is a 473-amino-acid chain: Suppressor of SWI4 1 homolog (473 aa).

The 264-residue stretch at 29-292 (PHSFVFTRGC…LIKVQEGVGE (264 aa)) folds into the Brix domain. Phosphoserine is present on residues serine 238 and serine 240. Residues 323-473 (AQRQAQQAQN…GRGRPRKRVA (151 aa)) are disordered. Residues 324-334 (QRQAQQAQNVQ) show a composition bias toward low complexity. Residues 335–360 (RKQEQREAHRKKSLEGMKKARVRGGD) are compositionally biased toward basic and acidic residues. Over residues 376–388 (GEDDDEQEDDDIE) the composition is skewed to acidic residues. Positions 407 to 421 (KRKRLAKSPGQKRKR) are enriched in basic residues. Residues 422 to 444 (REMDRGRGRLCDQKFPKPKDKSH) show a composition bias toward basic and acidic residues. At lysine 438 the chain carries N6-acetyllysine. The segment covering 464–473 (GRGRPRKRVA) has biased composition (basic residues).

The protein localises to the nucleus. Its subcellular location is the nucleolus. Functionally, may have a role in cell growth. This is Suppressor of SWI4 1 homolog (PPAN) from Pongo abelii (Sumatran orangutan).